The chain runs to 535 residues: Probable anion transporter 2, chloroplastic (535 aa).

A chloroplast-targeting transit peptide spans 1–95 (MASIRSCVSV…RERAVAAMCS (95 aa)). Helical transmembrane passes span 125–145 (VVAL…VMSV), 160–180 (FLGI…MVGG), 191–211 (VMAG…WAAS), 215–235 (IMLL…FPTM), 254–274 (ISMG…PIIM), 279–299 (LAGT…VWLF), 343–363 (IEMW…FVLL), 381–401 (AAWF…VAGA), 413–433 (VALV…VSLL), 443–463 (VAAV…AGYF), 483–503 (GIGT…VQWL), and 504–524 (GSFQ…TVFY).

The protein belongs to the major facilitator superfamily. Sodium/anion cotransporter (TC 2.A.1.14) family.

Its subcellular location is the plastid. It localises to the chloroplast membrane. In terms of biological role, probable anion transporter. The sequence is that of Probable anion transporter 2, chloroplastic (PHT4;2) from Oryza sativa subsp. japonica (Rice).